A 119-amino-acid chain; its full sequence is Large ribosomal subunit protein bL20 (119 aa).

This sequence belongs to the bacterial ribosomal protein bL20 family.

In terms of biological role, binds directly to 23S ribosomal RNA and is necessary for the in vitro assembly process of the 50S ribosomal subunit. It is not involved in the protein synthesizing functions of that subunit. In Nitrobacter hamburgensis (strain DSM 10229 / NCIMB 13809 / X14), this protein is Large ribosomal subunit protein bL20.